The chain runs to 563 residues: Arginine--tRNA ligase (563 aa).

Positions 120 to 130 match the 'HIGH' region motif; the sequence is PNIAKPFHVGH.

This sequence belongs to the class-I aminoacyl-tRNA synthetase family. As to quaternary structure, monomer.

The protein resides in the cytoplasm. The catalysed reaction is tRNA(Arg) + L-arginine + ATP = L-arginyl-tRNA(Arg) + AMP + diphosphate. The protein is Arginine--tRNA ligase of Clostridium beijerinckii (strain ATCC 51743 / NCIMB 8052) (Clostridium acetobutylicum).